Consider the following 176-residue polypeptide: Isopentenyl-diphosphate Delta-isomerase (176 aa).

Residues His-22 and His-28 each coordinate Mn(2+). The Nudix hydrolase domain maps to Leu-26–Ile-160. Cys-62 is an active-site residue. Mn(2+) is bound at residue His-64. Glu-82 contributes to the Mg(2+) binding site. The Mn(2+) site is built by Glu-108 and Glu-110. The active site involves Glu-110.

Belongs to the IPP isomerase type 1 family. Requires Mg(2+) as cofactor. It depends on Mn(2+) as a cofactor.

The protein localises to the cytoplasm. The catalysed reaction is isopentenyl diphosphate = dimethylallyl diphosphate. Its pathway is isoprenoid biosynthesis; dimethylallyl diphosphate biosynthesis; dimethylallyl diphosphate from isopentenyl diphosphate: step 1/1. It participates in porphyrin-containing compound metabolism; chlorophyll biosynthesis. Its function is as follows. Catalyzes the 1,3-allylic rearrangement of the homoallylic substrate isopentenyl (IPP) to its highly electrophilic allylic isomer, dimethylallyl diphosphate (DMAPP). The protein is Isopentenyl-diphosphate Delta-isomerase of Jannaschia sp. (strain CCS1).